A 172-amino-acid chain; its full sequence is uncharacterized protein (172 aa).

4 helical membrane-spanning segments follow: residues 20–40 (LVLI…EYIF), 48–68 (CVYE…ALII), 76–96 (LILI…HSFV), and 146–166 (MTEY…LILF).

Its subcellular location is the cell membrane. This is an uncharacterized protein from Rickettsia prowazekii (strain Madrid E).